Consider the following 316-residue polypeptide: Secondary metabolism regulator LAE1 (316 aa).

It belongs to the methyltransferase superfamily. LaeA methyltransferase family. As to quaternary structure, component of the heterotrimeric velvet complex composed of LAE1, VEL1 and VEL2; VEL1 acting as a bridging protein between LAE1 and VEL2. Interacts with VEL1.

Its subcellular location is the nucleus. The catalysed reaction is L-methionyl-[protein] + S-adenosyl-L-methionine = S-methyl-L-methionyl-[protein] + S-adenosyl-L-homocysteine. Functionally, methyltransferase that performs automethylation. No other methyl-accepting substrate has been identified yet. Component of the velvet transcription factor complex that acts as a global regulator for secondary metabolite gene expression. Controls the expression of the gibberellins gene clusters, but does not affect bikaverin production. Controls the expression of the fusaric acid gene cluster. Acts as a virulence factors during infection, most likely through activation of gibberellins biosynthesis. This Gibberella fujikuroi (strain CBS 195.34 / IMI 58289 / NRRL A-6831) (Bakanae and foot rot disease fungus) protein is Secondary metabolism regulator LAE1.